The sequence spans 87 residues: Exodeoxyribonuclease 7 small subunit (87 aa).

Belongs to the XseB family. In terms of assembly, heterooligomer composed of large and small subunits.

It is found in the cytoplasm. It carries out the reaction Exonucleolytic cleavage in either 5'- to 3'- or 3'- to 5'-direction to yield nucleoside 5'-phosphates.. Its function is as follows. Bidirectionally degrades single-stranded DNA into large acid-insoluble oligonucleotides, which are then degraded further into small acid-soluble oligonucleotides. This is Exodeoxyribonuclease 7 small subunit from Pelotomaculum thermopropionicum (strain DSM 13744 / JCM 10971 / SI).